We begin with the raw amino-acid sequence, 148 residues long: SsrA-binding protein (148 aa).

Residues 123 to 148 (KLHDKRETEKKRDWEREKARIMRSAT) form a disordered region. The span at 126-142 (DKRETEKKRDWEREKAR) shows a compositional bias: basic and acidic residues.

It belongs to the SmpB family.

Its subcellular location is the cytoplasm. Its function is as follows. Required for rescue of stalled ribosomes mediated by trans-translation. Binds to transfer-messenger RNA (tmRNA), required for stable association of tmRNA with ribosomes. tmRNA and SmpB together mimic tRNA shape, replacing the anticodon stem-loop with SmpB. tmRNA is encoded by the ssrA gene; the 2 termini fold to resemble tRNA(Ala) and it encodes a 'tag peptide', a short internal open reading frame. During trans-translation Ala-aminoacylated tmRNA acts like a tRNA, entering the A-site of stalled ribosomes, displacing the stalled mRNA. The ribosome then switches to translate the ORF on the tmRNA; the nascent peptide is terminated with the 'tag peptide' encoded by the tmRNA and targeted for degradation. The ribosome is freed to recommence translation, which seems to be the essential function of trans-translation. The chain is SsrA-binding protein from Burkholderia pseudomallei (strain 1710b).